The chain runs to 191 residues: Peptidyl-tRNA hydrolase (191 aa).

Tyrosine 14 serves as a coordination point for tRNA. Catalysis depends on histidine 19, which acts as the Proton acceptor. The tRNA site is built by tyrosine 64, asparagine 66, and asparagine 112.

Belongs to the PTH family. Monomer.

It localises to the cytoplasm. It carries out the reaction an N-acyl-L-alpha-aminoacyl-tRNA + H2O = an N-acyl-L-amino acid + a tRNA + H(+). Hydrolyzes ribosome-free peptidyl-tRNAs (with 1 or more amino acids incorporated), which drop off the ribosome during protein synthesis, or as a result of ribosome stalling. Functionally, catalyzes the release of premature peptidyl moieties from peptidyl-tRNA molecules trapped in stalled 50S ribosomal subunits, and thus maintains levels of free tRNAs and 50S ribosomes. This is Peptidyl-tRNA hydrolase from Clostridium botulinum (strain Alaska E43 / Type E3).